The following is a 314-amino-acid chain: Olfactory receptor 5P72 (314 aa).

Residues 1 to 28 (MAFLEVGNHTAVTEFILLGLTDDPVLRV) are Extracellular-facing. The N-linked (GlcNAc...) asparagine glycan is linked to Asn8. A helical transmembrane segment spans residues 29 to 49 (VLFTIILCIYLVTVMGNLSTI). The Cytoplasmic portion of the chain corresponds to 50-57 (LLIRVSSQ). A helical transmembrane segment spans residues 58–78 (LHHPMYFFLSHLASVDMGLSS). Residues 79-102 (SVTPNMLLNFLIERNTISYLGCGI) are Extracellular-facing. Cys100 and Cys192 are disulfide-bonded. The chain crosses the membrane as a helical span at residues 103–123 (QQSLADFFGSVECFLLAAMAY). Over 124-136 (DRFMAICNPLLYS) the chain is Cytoplasmic. Residues 137 to 157 (TKMSTKVCVQLVVGSYIGGFL) form a helical membrane-spanning segment. Residues 158–199 (NASLIMFYFFSFLFCGPNRVDHFFCDFAPLVELSCSDVSVSV) lie on the Extracellular side of the membrane. Residues 200–220 (IVISFSAGSVTMITVFVIAVS) form a helical membrane-spanning segment. Residues 221-240 (YSYILITILKMHSIEGRHKA) are Cytoplasmic-facing. The chain crosses the membrane as a helical span at residues 241-261 (FSTCTSHLTAVTLYYGTITFI). Residues 262–274 (YVMPKSSFSTDQN) lie on the Extracellular side of the membrane. The chain crosses the membrane as a helical span at residues 275–295 (KVVSVFYMVMIPMLNPLIYSL). Topologically, residues 296 to 314 (RNNEIKGAIKRQLGKKMSC) are cytoplasmic.

The protein belongs to the G-protein coupled receptor 1 family.

It localises to the cell membrane. Potential odorant receptor. The protein is Olfactory receptor 5P72 of Mus musculus (Mouse).